The following is a 197-amino-acid chain: uncharacterized protein (197 aa).

This is an uncharacterized protein from Orgyia pseudotsugata multicapsid polyhedrosis virus (OpMNPV).